The primary structure comprises 200 residues: uncharacterized protein (200 aa).

A helical transmembrane segment spans residues 7–29 (FFFLFSFISHAMMLTGLIGSSSF).

It localises to the membrane. This is an uncharacterized protein from Saccharomyces cerevisiae (strain ATCC 204508 / S288c) (Baker's yeast).